We begin with the raw amino-acid sequence, 586 residues long: Homothallic switching endonuclease (586 aa).

Residues 215-370 (MLGLWLGDST…IVHISRSLGM (156 aa)) enclose the DOD-type homing endonuclease domain.

Rapidly degraded via the ubiquitin-26S proteasome system through two ubiquitin-conjugating enzymes UBC2/RAD6 and UBC3/CDC34.

The protein localises to the nucleus. Initiation of mating type interconversion. This protein is a site-specific endonuclease that cleaves a site in the mat locus on chromosome III. The double-strand break is followed by a unidirectional gene conversion event that replaces the information at the mat locus by information copied from either of the two homologous loci (HMR and HML) that reside at the extremity of the chromosome III. Endonuclease expression takes place in late G1 just before cells enter S phase. The sequence is that of Homothallic switching endonuclease (HO) from Saccharomyces cerevisiae (strain ATCC 204508 / S288c) (Baker's yeast).